The chain runs to 123 residues: SGSCEVKTCWWSQPDFRVIGDYLKDKYDSASEMVVEKHRESRGWVETLRPKYNFFKAPTEKDLVYYENSPNFCEPNPETGSFGTRDRICNVTSHGIDGCDLLCCGRGHNTRTEKRKEKCHCIF.

S1 carries the O-palmitoleoyl serine lipid modification. An intrachain disulfide couples C89 to C104. An N-linked (GlcNAc...) asparagine glycan is attached at N90.

This sequence belongs to the Wnt family. Post-translationally, disulfide bonds have critical and distinct roles in secretion and activity. Loss of each conserved cysteine results in high molecular weight oxidized Wnt oligomers, which are formed through inter-Wnt disulfide bonding. Palmitoleoylation is required for efficient binding to frizzled receptors. Depalmitoleoylation leads to Wnt signaling pathway inhibition.

It localises to the secreted. The protein resides in the extracellular space. Its subcellular location is the extracellular matrix. In terms of biological role, ligand for members of the frizzled family of seven transmembrane receptors. Functions in the canonical Wnt signaling pathway that results in activation of transcription factors of the TCF/LEF family. Required for normal embryonic mesoderm development and formation of caudal somites. Required for normal morphogenesis of the developing neural tube. The polypeptide is Protein Wnt-3a (WNT3A) (Meleagris gallopavo (Wild turkey)).